The primary structure comprises 599 residues: Sulfite reductase [NADPH] flavoprotein alpha-component (599 aa).

Positions 64–202 constitute a Flavodoxin-like domain; the sequence is ITIISASQTG…AASEWRARVV (139 aa). FMN is bound by residues 70–75, 117–120, and 153–162; these read SQTGNA, STQG, and LGDSSYEFFC. An FAD-binding FR-type domain is found at 234-448; it reads DAPLVASLSV…IEHNDNFRLP (215 aa). Residues Thr-322, Ala-356, 386-389, 404-406, Tyr-410, and 419-422 each bind FAD; these read RLYS, TVG, and GGAS. NADP(+) is bound by residues 519–520, 525–529, and Asp-561; these read SR and KVYVQ. Tyr-599 lines the FAD pocket.

This sequence belongs to the NADPH-dependent sulphite reductase flavoprotein subunit CysJ family. The protein in the N-terminal section; belongs to the flavodoxin family. It in the C-terminal section; belongs to the flavoprotein pyridine nucleotide cytochrome reductase family. As to quaternary structure, alpha(8)-beta(8). The alpha component is a flavoprotein, the beta component is a hemoprotein. It depends on FAD as a cofactor. FMN is required as a cofactor.

It carries out the reaction hydrogen sulfide + 3 NADP(+) + 3 H2O = sulfite + 3 NADPH + 4 H(+). It functions in the pathway sulfur metabolism; hydrogen sulfide biosynthesis; hydrogen sulfide from sulfite (NADPH route): step 1/1. Functionally, component of the sulfite reductase complex that catalyzes the 6-electron reduction of sulfite to sulfide. This is one of several activities required for the biosynthesis of L-cysteine from sulfate. The flavoprotein component catalyzes the electron flow from NADPH -&gt; FAD -&gt; FMN to the hemoprotein component. The protein is Sulfite reductase [NADPH] flavoprotein alpha-component of Escherichia coli O157:H7.